The chain runs to 138 residues: Protein transport protein got1 homolog (138 aa).

The Cytoplasmic portion of the chain corresponds to 1 to 7; that stretch reads MFTDQQK. Residues 8–28 form a helical membrane-spanning segment; that stretch reads IGAMLSAMGLFFGFLGVLLFL. Topologically, residues 29–30 are lumenal; it reads DR. Residues 31–51 form a helical membrane-spanning segment; that stretch reads NLLALGNLLLVSGIVLILGLQ. Over 52 to 62 the chain is Cytoplasmic; it reads KTTKFFAQKKK. A helical membrane pass occupies residues 63 to 82; the sequence is IKGTILFFFGIVVLLVTRWT. Residues 83–87 are Lumenal-facing; sequence FVGMV. Residues 88 to 108 traverse the membrane as a helical segment; sequence IEIFGFVNLFGDAFPIVISIL. At 109-138 the chain is on the cytoplasmic side; the sequence is RKLPIIGNILNHPLVNRLLQKADSGNELPF.

This sequence belongs to the GOT1 family.

The protein resides in the golgi apparatus membrane. In terms of biological role, may be involved in fusion of ER-derived transport vesicles with the Golgi complex. This is Protein transport protein got1 homolog (golt1) from Dictyostelium discoideum (Social amoeba).